Here is a 314-residue protein sequence, read N- to C-terminus: Cell division protein FtsQ (314 aa).

Basic and acidic residues-rich tracts occupy residues 1–15 (MTEHNEDPQIERVAD) and 30–57 (ESKDEPAEHPEFEGPRRRARRERAERRA). Residues 1–57 (MTEHNEDPQIERVADDAADEEAVTEPLATESKDEPAEHPEFEGPRRRARRERAERRA) form a disordered region. The Cytoplasmic portion of the chain corresponds to 1–99 (MTEHNEDPQI…AARGVVRGLK (99 aa)). The chain crosses the membrane as a helical span at residues 100–120 (ALLATVVLAVVGIGLGLALYF). At 121-314 (TPAMSAREIV…VSSPDLPTVK (194 aa)) the chain is on the extracellular side. In terms of domain architecture, POTRA spans 124–192 (MSAREIVIIG…SALRITIVER (69 aa)).

Belongs to the FtsQ/DivIB family. FtsQ subfamily.

It is found in the cell membrane. Its function is as follows. Essential cell division protein. In Mycobacterium bovis (strain ATCC BAA-935 / AF2122/97), this protein is Cell division protein FtsQ.